Consider the following 365-residue polypeptide: Chorismate synthase (365 aa).

NADP(+) is bound at residue Arg47. FMN is bound by residues 124–126 (RAS), Gly287, 302–306 (KPTAT), and Arg328.

Belongs to the chorismate synthase family. In terms of assembly, homotetramer. FMNH2 is required as a cofactor.

The catalysed reaction is 5-O-(1-carboxyvinyl)-3-phosphoshikimate = chorismate + phosphate. It participates in metabolic intermediate biosynthesis; chorismate biosynthesis; chorismate from D-erythrose 4-phosphate and phosphoenolpyruvate: step 7/7. Its function is as follows. Catalyzes the anti-1,4-elimination of the C-3 phosphate and the C-6 proR hydrogen from 5-enolpyruvylshikimate-3-phosphate (EPSP) to yield chorismate, which is the branch point compound that serves as the starting substrate for the three terminal pathways of aromatic amino acid biosynthesis. This reaction introduces a second double bond into the aromatic ring system. The chain is Chorismate synthase from Prochlorococcus marinus (strain AS9601).